A 139-amino-acid chain; its full sequence is Large ribosomal subunit protein uL16 (139 aa).

Residues 1–16 (MLIPRRVKHRKQHHPG) show a composition bias toward basic residues. A disordered region spans residues 1-25 (MLIPRRVKHRKQHHPGRSGQATGGT).

The protein belongs to the universal ribosomal protein uL16 family. Part of the 50S ribosomal subunit.

Its function is as follows. Binds 23S rRNA and is also seen to make contacts with the A and possibly P site tRNAs. This is Large ribosomal subunit protein uL16 from Leifsonia xyli subsp. xyli (strain CTCB07).